We begin with the raw amino-acid sequence, 113 residues long: Nucleoid-associated protein P9303_00241 (113 aa).

Residues 90 to 113 (TTTMKEQMEELTGGLNLNLPGMSD) form a disordered region.

The protein belongs to the YbaB/EbfC family. As to quaternary structure, homodimer.

The protein localises to the cytoplasm. It is found in the nucleoid. Binds to DNA and alters its conformation. May be involved in regulation of gene expression, nucleoid organization and DNA protection. This chain is Nucleoid-associated protein P9303_00241, found in Prochlorococcus marinus (strain MIT 9303).